The primary structure comprises 236 residues: Enolase-phosphatase E1 (236 aa).

Belongs to the HAD-like hydrolase superfamily. MasA/MtnC family. As to quaternary structure, monomer. Requires Mg(2+) as cofactor.

It carries out the reaction 5-methylsulfanyl-2,3-dioxopentyl phosphate + H2O = 1,2-dihydroxy-5-(methylsulfanyl)pent-1-en-3-one + phosphate. It participates in amino-acid biosynthesis; L-methionine biosynthesis via salvage pathway; L-methionine from S-methyl-5-thio-alpha-D-ribose 1-phosphate: step 3/6. It functions in the pathway amino-acid biosynthesis; L-methionine biosynthesis via salvage pathway; L-methionine from S-methyl-5-thio-alpha-D-ribose 1-phosphate: step 4/6. Functionally, bifunctional enzyme that catalyzes the enolization of 2,3-diketo-5-methylthiopentyl-1-phosphate (DK-MTP-1-P) into the intermediate 2-hydroxy-3-keto-5-methylthiopentenyl-1-phosphate (HK-MTPenyl-1-P), which is then dephosphorylated to form the acireductone 1,2-dihydroxy-3-keto-5-methylthiopentene (DHK-MTPene). In Frankia alni (strain DSM 45986 / CECT 9034 / ACN14a), this protein is Enolase-phosphatase E1.